Reading from the N-terminus, the 78-residue chain is MSDTAERIKKIVVEHLGVEPDKVVENASFLDDLGADSLDIIELVMAFEEEFGVEIPDDSVEKIGTVKDAVSYIDEHKA.

Positions 2 to 77 constitute a Carrier domain; the sequence is SDTAERIKKI…DAVSYIDEHK (76 aa). O-(pantetheine 4'-phosphoryl)serine is present on Ser37.

Belongs to the acyl carrier protein (ACP) family. Post-translationally, 4'-phosphopantetheine is transferred from CoA to a specific serine of apo-ACP by AcpS. This modification is essential for activity because fatty acids are bound in thioester linkage to the sulfhydryl of the prosthetic group.

Its subcellular location is the cytoplasm. It functions in the pathway lipid metabolism; fatty acid biosynthesis. Its function is as follows. Carrier of the growing fatty acid chain in fatty acid biosynthesis. The chain is Acyl carrier protein from Zymomonas mobilis subsp. mobilis (strain ATCC 31821 / ZM4 / CP4).